The following is a 606-amino-acid chain: EPM2A-interacting protein 1 (606 aa).

Position 147 is a phosphoserine (Ser-147).

In terms of assembly, interacts with EPM2A.

The protein resides in the endoplasmic reticulum. This Mus musculus (Mouse) protein is EPM2A-interacting protein 1 (Epm2aip1).